Consider the following 147-residue polypeptide: Hemoglobin subunit delta (147 aa).

The Globin domain occupies 3–147; sequence HLTADEKAAV…VAAALAHKYH (145 aa). Heme b-binding residues include histidine 64 and histidine 93.

The protein belongs to the globin family. As to quaternary structure, heterotetramer of two delta chains and two alpha chains. As to expression, red blood cells.

The sequence is that of Hemoglobin subunit delta (HBD) from Carlito syrichta (Philippine tarsier).